We begin with the raw amino-acid sequence, 83 residues long: Kunitz-type serine protease inhibitor mulgin-4 (83 aa).

A signal peptide spans 1-24 (MSSGGLLLLLGLLTLWEGLTPVSS). One can recognise a BPTI/Kunitz inhibitor domain in the interval 31-81 (CELPADPGPCNGLFQAFYYNPVQRTCLKFRYGGCKGNPNTFKTIEECKRTC). Disulfide bonds link C31–C81, C40–C64, and C56–C77.

Belongs to the venom Kunitz-type family. Expressed by the venom gland.

It is found in the secreted. In terms of biological role, serine protease inhibitor. The protein is Kunitz-type serine protease inhibitor mulgin-4 of Pseudechis australis (Mulga snake).